The chain runs to 1383 residues: Putative autophagy-related protein 11 (1383 aa).

2 coiled-coil regions span residues 16-49 (DKNNDILISKQKIEDLKKSIENLLNDKNAHYELN) and 117-324 (NLFL…QNKE). Composition is skewed to basic and acidic residues over residues 1151–1224 (EEEK…EDRK) and 1233–1249 (HSSDKEEKYNKKEKTKE). The interval 1151–1249 (EEEKKKNEEE…KYNKKEKTKE (99 aa)) is disordered.

Belongs to the ATG11 family.

Functionally, involved in cytoplasm to vacuole transport (Cvt), pexophagy, mitophagy and nucleophagy. Works as scaffold proteins that recruit ATG proteins to the pre-autophagosome (PAS), the site of vesicle/autophagosome formation. The sequence is that of Putative autophagy-related protein 11 from Plasmodium falciparum (isolate 3D7).